The sequence spans 262 residues: uncharacterized protein (262 aa).

Positions 5–107 constitute a BTB domain; it reads PLISLDVEGV…MIEHKLRTFC (103 aa). One can recognise a CRIB domain in the interval 182 to 195; it reads ISLPRNFTHIAHVG.

This is an uncharacterized protein from Caenorhabditis elegans.